We begin with the raw amino-acid sequence, 215 residues long: Small ribosomal subunit protein uS5 (215 aa).

A compositionally biased stretch (gly residues) spans 1-12; sequence MSGTQRRGGGAG. Residues 1 to 31 are disordered; the sequence is MSGTQRRGGGAGGERRGRDNRRGQNDRNRNQ. A compositionally biased stretch (basic and acidic residues) spans 13-31; sequence GERRGRDNRRGQNDRNRNQ. The region spanning 34 to 97 is the S5 DRBM domain; that stretch reads YLERVVAINR…EEAKKHFFKV (64 aa).

This sequence belongs to the universal ribosomal protein uS5 family. As to quaternary structure, part of the 30S ribosomal subunit. Contacts proteins S4 and S8.

With S4 and S12 plays an important role in translational accuracy. Functionally, located at the back of the 30S subunit body where it stabilizes the conformation of the head with respect to the body. The sequence is that of Small ribosomal subunit protein uS5 from Cutibacterium acnes (strain DSM 16379 / KPA171202) (Propionibacterium acnes).